A 258-amino-acid chain; its full sequence is Tryptophan synthase alpha chain (258 aa).

Active-site proton acceptor residues include E47 and D58.

This sequence belongs to the TrpA family. As to quaternary structure, tetramer of two alpha and two beta chains.

It catalyses the reaction (1S,2R)-1-C-(indol-3-yl)glycerol 3-phosphate + L-serine = D-glyceraldehyde 3-phosphate + L-tryptophan + H2O. It participates in amino-acid biosynthesis; L-tryptophan biosynthesis; L-tryptophan from chorismate: step 5/5. Its function is as follows. The alpha subunit is responsible for the aldol cleavage of indoleglycerol phosphate to indole and glyceraldehyde 3-phosphate. The chain is Tryptophan synthase alpha chain from Bacillus cereus (strain ATCC 14579 / DSM 31 / CCUG 7414 / JCM 2152 / NBRC 15305 / NCIMB 9373 / NCTC 2599 / NRRL B-3711).